A 35-amino-acid polypeptide reads, in one-letter code: Beta/delta-theraphotoxin-Pre1a (35 aa).

Intrachain disulfides connect Cys3/Cys18, Cys10/Cys23, and Cys17/Cys30.

The protein belongs to the neurotoxin 10 (Hwtx-1) family. As to expression, expressed by the venom gland.

Its subcellular location is the secreted. Gating-modifier toxin that both inhibits the peak current of human Nav1.1/SCN1A, rat Nav1.2/SCN2A, human Nav1.6/SCN8A, and human Nav1.7/SCN9A and concurrently inhibits fast inactivation of human Nav1.1 and rat Nav1.3/SCN3A. The relative rank order potency for Nav modulation is Nav1.3 (inactivation EC(50)=45 nM) &gt; Nav1.7 &gt; Nav1.2 &gt; Nav1.1 (inactivation) &gt; Nav1.1 &gt; Nav1.6 &gt; Nav1.3 (IC(50)=8 uM). The DII and DIV S3-S4 loops of Nav channel voltage sensors are important for the interaction of this toxin with Nav channels but cannot account for its unique subtype selectivity. It is the variability of the S1-S2 loops between NaV channels which contributes substantially to the selectivity profile observed for this toxin, particularly with regards to fast inactivation. This toxin may bind the channel in the resting state. The chain is Beta/delta-theraphotoxin-Pre1a from Psalmopoeus reduncus (Costa Rican orangemouth tarantula).